The sequence spans 257 residues: Ribonuclease HII (257 aa).

One can recognise an RNase H type-2 domain in the interval 72–257 (TYIAGIDEVG…FAPIKDMIQK (186 aa)). 3 residues coordinate a divalent metal cation: Asp-78, Glu-79, and Asp-170.

It belongs to the RNase HII family. It depends on Mn(2+) as a cofactor. Requires Mg(2+) as cofactor.

It is found in the cytoplasm. The catalysed reaction is Endonucleolytic cleavage to 5'-phosphomonoester.. In terms of biological role, endonuclease that specifically degrades the RNA of RNA-DNA hybrids. This Bacillus cereus (strain AH820) protein is Ribonuclease HII.